Consider the following 154-residue polypeptide: Endoribonuclease YbeY (154 aa).

3 residues coordinate Zn(2+): histidine 113, histidine 117, and histidine 123.

This sequence belongs to the endoribonuclease YbeY family. Zn(2+) serves as cofactor.

Its subcellular location is the cytoplasm. Its function is as follows. Single strand-specific metallo-endoribonuclease involved in late-stage 70S ribosome quality control and in maturation of the 3' terminus of the 16S rRNA. The protein is Endoribonuclease YbeY of Ehrlichia chaffeensis (strain ATCC CRL-10679 / Arkansas).